The following is a 392-amino-acid chain: Formate-dependent phosphoribosylglycinamide formyltransferase (392 aa).

N(1)-(5-phospho-beta-D-ribosyl)glycinamide-binding positions include 15–16 and E75; that span reads EL. ATP contacts are provided by residues R107, K148, 153–158, 188–191, and E196; these read SSGKGQ and EEFL. One can recognise an ATP-grasp domain in the interval 112–302; that stretch reads DLAAGELNLR…EFELHLRAVL (191 aa). Residues E261 and E273 each contribute to the Mg(2+) site. Residues D280, K350, and 357-358 each bind N(1)-(5-phospho-beta-D-ribosyl)glycinamide; that span reads RR.

This sequence belongs to the PurK/PurT family. Homodimer.

It catalyses the reaction N(1)-(5-phospho-beta-D-ribosyl)glycinamide + formate + ATP = N(2)-formyl-N(1)-(5-phospho-beta-D-ribosyl)glycinamide + ADP + phosphate + H(+). It functions in the pathway purine metabolism; IMP biosynthesis via de novo pathway; N(2)-formyl-N(1)-(5-phospho-D-ribosyl)glycinamide from N(1)-(5-phospho-D-ribosyl)glycinamide (formate route): step 1/1. Functionally, involved in the de novo purine biosynthesis. Catalyzes the transfer of formate to 5-phospho-ribosyl-glycinamide (GAR), producing 5-phospho-ribosyl-N-formylglycinamide (FGAR). Formate is provided by PurU via hydrolysis of 10-formyl-tetrahydrofolate. This chain is Formate-dependent phosphoribosylglycinamide formyltransferase, found in Synechococcus sp. (strain CC9605).